A 384-amino-acid polypeptide reads, in one-letter code: Guanine nucleotide-binding protein alpha-2 subunit (384 aa).

The segment at 1–23 (MGLVCSRNRRYRDSDPEENAQAA) is disordered. A lipid anchor (N-myristoyl glycine) is attached at G2. C5 is lipidated: S-palmitoyl cysteine. Positions 38-384 (HIQKLLLLGA…RRNLFEAGLL (347 aa)) constitute a G-alpha domain. Positions 41–54 (KLLLLGAGESGKST) are G1 motif. Residues E49, S50, G51, K52, S53, T54, D163, L188, Y189, T194, G222, N288, K289, D291, and A356 each coordinate GTP. Mg(2+) is bound at residue S53. The G2 motif stretch occupies residues 186 to 194 (DVLYARVRT). T194 is a Mg(2+) binding site. Residues 215-224 (YRLFDVGGQR) are G3 motif. Residues 284 to 291 (MLFLNKFD) are G4 motif. The segment at 354–359 (TTALDQ) is G5 motif.

Belongs to the G-alpha family. G proteins are composed of 3 units; alpha, beta and gamma. The alpha chain contains the guanine nucleotide binding site. Mg(2+) is required as a cofactor.

In terms of biological role, guanine nucleotide-binding proteins (G proteins) are involved as modulators or transducers in various transmembrane signaling systems. This is Guanine nucleotide-binding protein alpha-2 subunit (GPA2) from Pisum sativum (Garden pea).